We begin with the raw amino-acid sequence, 390 residues long: GDSL esterase/lipase At1g28580 (390 aa).

A signal peptide spans 1–28 (MAYPGSPILMKLLVFIFLSTFVVTNVSS). Ser-44 (nucleophile) is an active-site residue. 2 N-linked (GlcNAc...) asparagine glycosylation sites follow: Asn-140 and Asn-322. Catalysis depends on residues Asp-347 and His-350.

It belongs to the 'GDSL' lipolytic enzyme family.

The protein resides in the secreted. The protein is GDSL esterase/lipase At1g28580 of Arabidopsis thaliana (Mouse-ear cress).